Reading from the N-terminus, the 262-residue chain is ABSCISIC ACID-INSENSITIVE 5-like protein 3 (262 aa).

A phosphoserine mark is found at Ser-21, Ser-43, and Ser-66. Thr-104 is subject to Phosphothreonine. The bZIP domain occupies Val-190 to Lys-253. The basic motif stretch occupies residues Arg-192–Lys-211. A leucine-zipper region spans residues Leu-218–Leu-232. The span at Glu-239 to Trp-252 shows a compositional bias: basic and acidic residues. The tract at residues Glu-239–Leu-262 is disordered.

Belongs to the bZIP family. ABI5 subfamily. In terms of assembly, DNA-binding heterodimer with ABI5/DPBF1, DPBF2 or AREB3/DPBF3. Interacts with the AFP proteins AFP2, AFP3 and AFP4. In terms of tissue distribution, predominantly expressed in seeds.

It localises to the nucleus. Binds to the embryo specification element and the ABA-responsive element (ABRE) of the Dc3 gene promoter and to the ABRE of the Em1 gene promoter. Could participate in abscisic acid-regulated gene expression during seed development. In Arabidopsis thaliana (Mouse-ear cress), this protein is ABSCISIC ACID-INSENSITIVE 5-like protein 3 (DPBF4).